A 1009-amino-acid polypeptide reads, in one-letter code: Protein translocase subunit SecA (1009 aa).

ATP-binding positions include glutamine 86, 104-108, and aspartate 497; that span reads GEGKT. Disordered regions lie at residues 869–894 and 949–1009; these read AVPQ…GQQP and ERRP…RNAG. Composition is skewed to low complexity over residues 883–894 and 953–973; these read PVPAATAPGQQP and SGAA…AGAG. The Zn(2+) site is built by cysteine 990, cysteine 992, cysteine 1001, and histidine 1002.

Belongs to the SecA family. In terms of assembly, monomer and homodimer. Part of the essential Sec protein translocation apparatus which comprises SecA, SecYEG and auxiliary proteins SecDF. Other proteins may also be involved. Zn(2+) is required as a cofactor.

It is found in the cell membrane. The protein localises to the cytoplasm. The catalysed reaction is ATP + H2O + cellular proteinSide 1 = ADP + phosphate + cellular proteinSide 2.. Its function is as follows. Part of the Sec protein translocase complex. Interacts with the SecYEG preprotein conducting channel. Has a central role in coupling the hydrolysis of ATP to the transfer of proteins into and across the cell membrane, serving as an ATP-driven molecular motor driving the stepwise translocation of polypeptide chains across the membrane. This is Protein translocase subunit SecA from Acidothermus cellulolyticus (strain ATCC 43068 / DSM 8971 / 11B).